A 302-amino-acid chain; its full sequence is Heme A synthase (302 aa).

The Cytoplasmic portion of the chain corresponds to 1-8 (MFRKQNLK). A helical transmembrane segment spans residues 9 to 29 (WLGVLATIIMTFVQLGGALVT). Residues 30 to 67 (KTGSEDGCGSSWPLCNGALLPENLPIQTIIELSHRAVS) lie on the Extracellular side of the membrane. Cysteines 37 and 44 form a disulfide. Glutamate 60 is an active-site residue. Histidine 63 lines the heme o pocket. The helical transmembrane segment at 68–88 (AISLIVVLWLVITAWKNIGYI) threads the bilayer. Residues 89 to 93 (KEIKP) lie on the Cytoplasmic side of the membrane. Residues 94–114 (LSIISVGFLLVQALVGAAAVI) traverse the membrane as a helical segment. Residues 115–125 (WQQNPYVLALH) lie on the Extracellular side of the membrane. Residue histidine 125 coordinates heme o. Residues 126-146 (FGISLISFSSVFLMTLIIFSI) form a helical membrane-spanning segment. The Cytoplasmic portion of the chain corresponds to 147–161 (DKKYEADILFIHKPL). Residues 162–182 (RILTWLMAIIVYLTIYTGALV) form a helical membrane-spanning segment. The Extracellular segment spans residues 183–215 (RHTKSSLAYGAWPIPFDDIVPHNAHDWVQFSHR). Residue histidine 214 participates in heme b binding. Residues 216–236 (GMAFITFIWIMITFIHAIKNY) form a helical membrane-spanning segment. The Cytoplasmic segment spans residues 237-244 (SDNRTVRY). A helical membrane pass occupies residues 245–265 (GYTASFILVILQVITGALSVI). Residues 266-270 (TNVNL) are Extracellular-facing. The chain crosses the membrane as a helical span at residues 271–291 (IIALFHALFITYLFGMIAYFI). Position 276 (histidine 276) interacts with heme b. At 292-302 (LLMLRTTRSLK) the chain is on the cytoplasmic side.

The protein belongs to the COX15/CtaA family. Type 1 subfamily. In terms of assembly, interacts with CtaB. It depends on heme b as a cofactor.

It localises to the cell membrane. It catalyses the reaction Fe(II)-heme o + 2 A + H2O = Fe(II)-heme a + 2 AH2. Its pathway is porphyrin-containing compound metabolism; heme A biosynthesis; heme A from heme O: step 1/1. Its function is as follows. Catalyzes the conversion of heme O to heme A by two successive hydroxylations of the methyl group at C8. The first hydroxylation forms heme I, the second hydroxylation results in an unstable dihydroxymethyl group, which spontaneously dehydrates, resulting in the formyl group of heme A. In Staphylococcus epidermidis (strain ATCC 12228 / FDA PCI 1200), this protein is Heme A synthase.